A 207-amino-acid chain; its full sequence is Large ribosomal subunit protein uL4 (207 aa).

The segment at 45–78 is disordered; it reads RQGTHKTKNRAEVSGGGRKPWRQKGTGRARQGSI.

This sequence belongs to the universal ribosomal protein uL4 family. In terms of assembly, part of the 50S ribosomal subunit.

Functionally, one of the primary rRNA binding proteins, this protein initially binds near the 5'-end of the 23S rRNA. It is important during the early stages of 50S assembly. It makes multiple contacts with different domains of the 23S rRNA in the assembled 50S subunit and ribosome. In terms of biological role, forms part of the polypeptide exit tunnel. The protein is Large ribosomal subunit protein uL4 of Geobacillus sp. (strain WCH70).